A 431-amino-acid chain; its full sequence is Tol-Pal system protein TolB (431 aa).

The signal sequence occupies residues 1-26 (MSLMTKLGFRALVASCLITAGSAANA). Residues 406–431 (DGSAPPQILSVQGGSVREPSWGPFMQ) form a disordered region.

The protein belongs to the TolB family. The Tol-Pal system is composed of five core proteins: the inner membrane proteins TolA, TolQ and TolR, the periplasmic protein TolB and the outer membrane protein Pal. They form a network linking the inner and outer membranes and the peptidoglycan layer.

It localises to the periplasm. In terms of biological role, part of the Tol-Pal system, which plays a role in outer membrane invagination during cell division and is important for maintaining outer membrane integrity. The sequence is that of Tol-Pal system protein TolB from Burkholderia cenocepacia (strain ATCC BAA-245 / DSM 16553 / LMG 16656 / NCTC 13227 / J2315 / CF5610) (Burkholderia cepacia (strain J2315)).